Here is a 311-residue protein sequence, read N- to C-terminus: Urease accessory protein UreD 2 (311 aa).

Belongs to the UreD family. In terms of assembly, ureD, UreF and UreG form a complex that acts as a GTP-hydrolysis-dependent molecular chaperone, activating the urease apoprotein by helping to assemble the nickel containing metallocenter of UreC. The UreE protein probably delivers the nickel.

The protein localises to the cytoplasm. Required for maturation of urease via the functional incorporation of the urease nickel metallocenter. This chain is Urease accessory protein UreD 2, found in Methylorubrum extorquens (strain PA1) (Methylobacterium extorquens).